We begin with the raw amino-acid sequence, 293 residues long: Ribosomal protein L11 methyltransferase (293 aa).

4 residues coordinate S-adenosyl-L-methionine: T145, G166, D188, and N230.

This sequence belongs to the methyltransferase superfamily. PrmA family.

Its subcellular location is the cytoplasm. It catalyses the reaction L-lysyl-[protein] + 3 S-adenosyl-L-methionine = N(6),N(6),N(6)-trimethyl-L-lysyl-[protein] + 3 S-adenosyl-L-homocysteine + 3 H(+). Its function is as follows. Methylates ribosomal protein L11. The sequence is that of Ribosomal protein L11 methyltransferase from Yersinia pseudotuberculosis serotype I (strain IP32953).